Reading from the N-terminus, the 110-residue chain is UPF0122 protein lin1916 (110 aa).

The protein belongs to the UPF0122 family.

Might take part in the signal recognition particle (SRP) pathway. This is inferred from the conservation of its genetic proximity to ftsY/ffh. May be a regulatory protein. This Listeria innocua serovar 6a (strain ATCC BAA-680 / CLIP 11262) protein is UPF0122 protein lin1916.